The primary structure comprises 82 residues: Putative defensin-like protein 70 (82 aa).

Residues 1 to 27 form the signal peptide; the sequence is MKMESSKMLVVFTLMVLIAVSSDLVSG. Cystine bridges form between cysteine 39–cysteine 80, cysteine 43–cysteine 66, cysteine 52–cysteine 78, and cysteine 56–cysteine 79.

Belongs to the DEFL family.

The protein resides in the secreted. The polypeptide is Putative defensin-like protein 70 (LCR83) (Arabidopsis thaliana (Mouse-ear cress)).